The primary structure comprises 310 residues: Pantoate--beta-alanine ligase (310 aa).

32 to 39 is an ATP binding site; that stretch reads MGYLHEGH. H39 acts as the Proton donor in catalysis. Q63 contacts (R)-pantoate. Q63 lines the beta-alanine pocket. 175-178 serves as a coordination point for ATP; sequence GKKD. Q181 serves as a coordination point for (R)-pantoate. 212 to 215 is an ATP binding site; that stretch reads MSSR.

The protein belongs to the pantothenate synthetase family. As to quaternary structure, homodimer. Expressed in roots, cotyledons, leaves, stems, cauline leaves, stigma, sepals and petals.

The protein localises to the cytoplasm. The protein resides in the cytosol. It carries out the reaction (R)-pantoate + beta-alanine + ATP = (R)-pantothenate + AMP + diphosphate + H(+). It functions in the pathway cofactor biosynthesis; (R)-pantothenate biosynthesis; (R)-pantothenate from (R)-pantoate and beta-alanine: step 1/1. Enzyme kinetics do not match Michaelis-Menten kinetics, suggesting allosteric behavior. Inhibited by high pantoate levels. Functionally, catalyzes the condensation of pantoate with beta-alanine to form pantothenate. Essential for panthotenate biosynthesis. This chain is Pantoate--beta-alanine ligase, found in Arabidopsis thaliana (Mouse-ear cress).